The primary structure comprises 448 residues: Asparagine--tRNA ligase (448 aa).

This sequence belongs to the class-II aminoacyl-tRNA synthetase family. Homodimer.

It localises to the cytoplasm. The catalysed reaction is tRNA(Asn) + L-asparagine + ATP = L-asparaginyl-tRNA(Asn) + AMP + diphosphate + H(+). This Streptococcus mutans serotype c (strain ATCC 700610 / UA159) protein is Asparagine--tRNA ligase.